Reading from the N-terminus, the 488-residue chain is Homoserine O-acetyltransferase (488 aa).

In terms of domain architecture, AB hydrolase-1 spans 47–355 (NAILVCHALT…SYGHDAFLLE (309 aa)). Ser153 functions as the Nucleophile in the catalytic mechanism. Arg222 is a substrate binding site. Residues Asp316 and His349 contribute to the active site. Asp350 is a substrate binding site. CBS domains lie at 376-433 (MTEK…CSKL) and 437-488 (MTRD…RLIG).

This sequence belongs to the AB hydrolase superfamily. MetX family. Homodimer.

It is found in the cytoplasm. It catalyses the reaction L-homoserine + acetyl-CoA = O-acetyl-L-homoserine + CoA. It functions in the pathway amino-acid biosynthesis; L-methionine biosynthesis via de novo pathway; O-acetyl-L-homoserine from L-homoserine: step 1/1. Functionally, transfers an acetyl group from acetyl-CoA to L-homoserine, forming acetyl-L-homoserine. In Methanococcoides burtonii (strain DSM 6242 / NBRC 107633 / OCM 468 / ACE-M), this protein is Homoserine O-acetyltransferase.